Here is an 80-residue protein sequence, read N- to C-terminus: uncharacterized protein (80 aa).

An N-terminal signal peptide occupies residues 1-15 (MVKLSFTLRFGDVWV).

This is an uncharacterized protein from Archaeoglobus fulgidus (strain ATCC 49558 / DSM 4304 / JCM 9628 / NBRC 100126 / VC-16).